Reading from the N-terminus, the 299-residue chain is Coenzyme PQQ synthesis protein B (299 aa).

Belongs to the PqqB family.

It functions in the pathway cofactor biosynthesis; pyrroloquinoline quinone biosynthesis. Functionally, may be involved in the transport of PQQ or its precursor to the periplasm. The chain is Coenzyme PQQ synthesis protein B from Methylobacterium radiotolerans (strain ATCC 27329 / DSM 1819 / JCM 2831 / NBRC 15690 / NCIMB 10815 / 0-1).